Consider the following 125-residue polypeptide: MPEPAKSRPAPKKGSKKAVTKAQKKDGKERKRSRKESYSVYVYKVLKQVHPDTGISSKAMGIMNSFVNDIFERIAGERRLAHYNKRSTITSREIQTAVRLLLPGELAKHAVSEGTKAVTKYTSSK.

Residues methionine 1–glutamate 36 form a disordered region. The residue at position 2 (proline 2) is an N-acetylproline. At glutamate 3 the chain carries ADP-ribosyl glutamic acid. Lysine 6 is subject to N6-(2-hydroxyisobutyryl)lysine; alternate. Lysine 6 is subject to N6-(beta-hydroxybutyryl)lysine; alternate. Lysine 6 is modified (N6-acetyllysine; alternate). The residue at position 6 (lysine 6) is an N6-butyryllysine; alternate. Position 6 is an N6-crotonyllysine; alternate (lysine 6). Position 6 is an N6-lactoyllysine; alternate (lysine 6). A Glycyl lysine isopeptide (Lys-Gly) (interchain with G-Cter in SUMO2); alternate cross-link involves residue lysine 6. At serine 7 the chain carries ADP-ribosylserine. Residues proline 9–valine 19 show a composition bias toward basic residues. Lysine 12 carries the post-translational modification N6-(beta-hydroxybutyryl)lysine; alternate. An N6-acetyllysine; alternate mark is found at lysine 12 and lysine 13. 2 positions are modified to N6-crotonyllysine; alternate: lysine 12 and lysine 13. The residue at position 12 (lysine 12) is an N6-lactoyllysine; alternate. Lysine 13 is subject to N6-(2-hydroxyisobutyryl)lysine; alternate. Serine 15 is modified (phosphoserine; by STK4/MST1). N6-acetyllysine; alternate is present on residues lysine 16, lysine 17, lysine 21, and lysine 24. 4 positions are modified to N6-crotonyllysine; alternate: lysine 16, lysine 17, lysine 21, and lysine 24. Lysine 16, lysine 17, lysine 21, and lysine 24 each carry N6-lactoyllysine; alternate. The residue at position 17 (lysine 17) is an N6-glutaryllysine; alternate. Lysine 21 and lysine 24 each carry N6-(2-hydroxyisobutyryl)lysine; alternate. N6-(beta-hydroxybutyryl)lysine; alternate is present on lysine 21. Lysine 21 carries the N6-butyryllysine; alternate modification. Lysine 21 is covalently cross-linked (Glycyl lysine isopeptide (Lys-Gly) (interchain with G-Cter in SUMO2); alternate). Lysine 25 is subject to N6-(2-hydroxyisobutyryl)lysine. Lysine 35 is modified (N6-(2-hydroxyisobutyryl)lysine; alternate). At lysine 35 the chain carries N6-(beta-hydroxybutyryl)lysine; alternate. The residue at position 35 (lysine 35) is an N6-crotonyllysine; alternate. Lysine 35 carries the post-translational modification N6-glutaryllysine; alternate. N6-succinyllysine; alternate is present on lysine 35. Lysine 35 is covalently cross-linked (Glycyl lysine isopeptide (Lys-Gly) (interchain with G-Cter in ubiquitin); alternate). PolyADP-ribosyl glutamic acid is present on glutamate 36. Serine 37 is modified (phosphoserine; by AMPK). Residues lysine 44, lysine 47, and lysine 58 each carry the N6-(2-hydroxyisobutyryl)lysine; alternate modification. Lysine 44 bears the N6-lactoyllysine; alternate mark. Lysine 44 and lysine 47 each carry N6-glutaryllysine; alternate. Residue lysine 47 is modified to N6-methyllysine; alternate. Position 58 is an N6,N6-dimethyllysine; alternate (lysine 58). The residue at position 79 (arginine 79) is a Dimethylated arginine. Lysine 85 carries the N6-(2-hydroxyisobutyryl)lysine; alternate modification. An N6-acetyllysine; alternate modification is found at lysine 85. Lysine 85 carries the N6-lactoyllysine; alternate modification. N6,N6,N6-trimethyllysine; alternate is present on lysine 85. 2 positions are modified to omega-N-methylarginine: arginine 86 and arginine 92. An N6-(2-hydroxyisobutyryl)lysine; alternate modification is found at lysine 108. Residue lysine 108 is modified to N6-lactoyllysine; alternate. Residue lysine 108 is modified to N6-glutaryllysine; alternate. Position 108 is an N6-methyllysine; alternate (lysine 108). O-linked (GlcNAc) serine glycosylation is present at serine 112. Threonine 115 is modified (phosphothreonine). N6-(2-hydroxyisobutyryl)lysine; alternate occurs at positions 116 and 120. N6-(beta-hydroxybutyryl)lysine; alternate is present on lysine 116. Lysine 116 and lysine 120 each carry N6-lactoyllysine; alternate. An N6-glutaryllysine; alternate mark is found at lysine 116 and lysine 120. An N6-succinyllysine; alternate mark is found at lysine 116 and lysine 120. Lysine 116 is subject to N6-methylated lysine; alternate. Residue lysine 120 forms a Glycyl lysine isopeptide (Lys-Gly) (interchain with G-Cter in ubiquitin); alternate linkage.

This sequence belongs to the histone H2B family. As to quaternary structure, the nucleosome is a histone octamer containing two molecules each of H2A, H2B, H3 and H4 assembled in one H3-H4 heterotetramer and two H2A-H2B heterodimers. The octamer wraps approximately 147 bp of DNA. In terms of processing, monoubiquitination at Lys-35 (H2BK34Ub) by the MSL1/MSL2 dimer is required for histone H3 'Lys-4' (H3K4me) and 'Lys-79' (H3K79me) methylation and transcription activation at specific gene loci, such as HOXA9 and MEIS1 loci. Similarly, monoubiquitination at Lys-120 (H2BK120Ub) by the RNF20/40 complex gives a specific tag for epigenetic transcriptional activation and is also prerequisite for histone H3 'Lys-4' and 'Lys-79' methylation. It also functions cooperatively with the FACT dimer to stimulate elongation by RNA polymerase II. H2BK120Ub also acts as a regulator of mRNA splicing: deubiquitination by USP49 is required for efficient cotranscriptional splicing of a large set of exons. Phosphorylated on Ser-15 (H2BS14ph) by STK4/MST1 during apoptosis; which facilitates apoptotic chromatin condensation. Also phosphorylated on Ser-15 in response to DNA double strand breaks (DSBs), and in correlation with somatic hypermutation and immunoglobulin class-switch recombination. Phosphorylation at Ser-37 (H2BS36ph) by AMPK in response to stress promotes transcription. Post-translationally, ADP-ribosylated by PARP1 or PARP2 on Ser-7 (H2BS6ADPr) in response to DNA damage. H2BS6ADPr promotes recruitment of CHD1L. Mono-ADP-ribosylated on Glu-3 (H2BE2ADPr) by PARP3 in response to single-strand breaks. Poly ADP-ribosylation on Glu-36 (H2BE35ADPr) by PARP1 regulates adipogenesis: it inhibits phosphorylation at Ser-37 (H2BS36ph), thereby blocking expression of pro-adipogenetic genes. In terms of processing, crotonylation (Kcr) is specifically present in male germ cells and marks testis-specific genes in post-meiotic cells, including X-linked genes that escape sex chromosome inactivation in haploid cells. Crotonylation marks active promoters and enhancers and confers resistance to transcriptional repressors. It is also associated with post-meiotically activated genes on autosomes. GlcNAcylation at Ser-112 promotes monoubiquitination of Lys-120. It fluctuates in response to extracellular glucose, and associates with transcribed genes. Post-translationally, lactylated in macrophages by EP300/P300 by using lactoyl-CoA directly derived from endogenous or exogenous lactate, leading to stimulates gene transcription.

The protein localises to the nucleus. The protein resides in the chromosome. Functionally, core component of nucleosome. Nucleosomes wrap and compact DNA into chromatin, limiting DNA accessibility to the cellular machineries which require DNA as a template. Histones thereby play a central role in transcription regulation, DNA repair, DNA replication and chromosomal stability. DNA accessibility is regulated via a complex set of post-translational modifications of histones, also called histone code, and nucleosome remodeling. Has broad antibacterial activity. May contribute to the formation of the functional antimicrobial barrier of the colonic epithelium, and to the bactericidal activity of amniotic fluid. This Rattus norvegicus (Rat) protein is Histone H2B type 1.